The primary structure comprises 423 residues: UDP-N-acetylglucosamine 1-carboxyvinyltransferase (423 aa).

22-23 (KN) provides a ligand contact to phosphoenolpyruvate. Position 98 (Arg-98) interacts with UDP-N-acetyl-alpha-D-glucosamine. The active-site Proton donor is Cys-122. Cys-122 is subject to 2-(S-cysteinyl)pyruvic acid O-phosphothioketal. UDP-N-acetyl-alpha-D-glucosamine is bound by residues 127 to 131 (RPVDQ), Asp-311, and Ile-333.

This sequence belongs to the EPSP synthase family. MurA subfamily.

The protein resides in the cytoplasm. The catalysed reaction is phosphoenolpyruvate + UDP-N-acetyl-alpha-D-glucosamine = UDP-N-acetyl-3-O-(1-carboxyvinyl)-alpha-D-glucosamine + phosphate. The protein operates within cell wall biogenesis; peptidoglycan biosynthesis. In terms of biological role, cell wall formation. Adds enolpyruvyl to UDP-N-acetylglucosamine. The polypeptide is UDP-N-acetylglucosamine 1-carboxyvinyltransferase (Stenotrophomonas maltophilia (strain R551-3)).